A 517-amino-acid polypeptide reads, in one-letter code: Cytochrome P450 monooxygenase cdmJ (517 aa).

Residues 15–35 traverse the membrane as a helical segment; sequence YMWSLTLFALCLSAILMFPFL. Asn-404 carries an N-linked (GlcNAc...) asparagine glycan. Cys-451 provides a ligand contact to heme.

Belongs to the cytochrome P450 family. Requires heme as cofactor.

It is found in the membrane. The catalysed reaction is 3-hydroxypentacecilide A + NADPH + O2 + H(+) = chrodrimanin F + NADP(+) + H2O. It carries out the reaction chrodrimanin C + NADPH + O2 + H(+) = chrodrimanin H + NADP(+) + H2O. It catalyses the reaction verruculide A + NADPH + O2 + H(+) = chrodrimanin E + NADP(+) + H2O. The enzyme catalyses chrodrimanin T + NADPH + O2 + H(+) = chrodrimanin A + NADP(+) + H2O. It functions in the pathway secondary metabolite biosynthesis; terpenoid biosynthesis. Cytochrome P450 monooxygenase; part of the gene cluster that mediates the biosynthesis of chrodrimanin B, a meroterpenoid that acts as a potent blocker of insect GABA-gated chloride channels. The first step of the pathway is the biosynthesis of 6-hydroxymellein by the polyketide synthase cdmE. The prenyltransferase cdmH acts as a 6-hydroxymellein 5-farnesyltransferase and produces the hydrophobic metabolite verruculide C. The FAD-dependent monooxygenase cdmI further converts verruculide C into verruculide B. The terpene cyclase cdmG then produced the pentacyclic molecule 3-hydroxypentacecilide A, the backbone structure of chrodrimanin B, via folding the farnesyl moiety of the substrate into the chair-boat conformation. The short-chain dehydrogenase/reductase cdmF functions as the 3-OH dehydrogenase that oxidizes the C-3 hydroxyl group of 3-hydroxypentacecilide A and produces chrodrimanin C, the dehydrogenated product of 3-hydroxypentacecilide A. The cytochrome P450 monooxygenase cdmJ then accepts both 3-hydroxypentacecilide A and chrodrimanin C and functions as a C-7-beta-hydroxylase to produce respectively chrodrimanin H and chrodrimanin F. The dioxygenase cdmA accepts chrodrimanin H to afford chrodrimanin E, which is further transformed to chrodrimanin A by the dioxygenase cdmD. CdmA can also accept chrodrimanin C as substrate to convert it into verruculide A, which is further converted into chrodrimanin T by cdmD. The last step of the biosynthesis is proposed to be performed by the acetyltransferase cdmC which acetylates chrodrimanin A to yield chrodrimanin B. The pathway may also lead to the production of additional shunt products, including chrodrimanins T and U. This chain is Cytochrome P450 monooxygenase cdmJ, found in Talaromyces verruculosus (Penicillium verruculosum).